We begin with the raw amino-acid sequence, 570 residues long: MKMSNMLISTLREVPAEAEIDSHKLMLRSGMIRKMASGIYNYMPLGLKALKKVEDIIREEMNEAGAQEFLASAMIPAELWQSSGRWDAYGAEMFRVKDRNERDFCLGPTHEEVFTDIAKNEIKSYKQLPVNLYQIQTKYRDERRPRFGVMRSREFVMKDAYSFDKDQQGLDLSYNKMYEAYVKIFNRCGLDAKCVEADSGAIGGSNSAEFMVKSEVGEDDIVFCTECNYAANIEKATARLEEAEKEELIEVEKVSTPDSRGIDEVSEFLNISSKKTVKTLLYNVDGKIVAVFVRGDREVNEVKVANASNASGDIEMASHEEYMNATGCGIGFAGPIGIKADLILVDKEVKNMCNFVTGANETGYHIKNVNYGRDFEGTIGDYRNVVEGEACPTCGGKLTISRGTEVGHIFKLGTKYSEAMDAKFIAENGKEAPFIMGCYGIGVTRTMASIIEQHNDENGIVWPLAVAPYHVSVIAVNVKDEEQVKIATKLYEDLKSMGVEALLDDRNERAGVKFKDSEIMGIPMRITVGKKIVDGEVEFKLRIGDMEVVKIEDVCQMVKGEFDKNNLKLR.

The protein belongs to the class-II aminoacyl-tRNA synthetase family. ProS type 1 subfamily. In terms of assembly, homodimer.

It is found in the cytoplasm. The enzyme catalyses tRNA(Pro) + L-proline + ATP = L-prolyl-tRNA(Pro) + AMP + diphosphate. Its function is as follows. Catalyzes the attachment of proline to tRNA(Pro) in a two-step reaction: proline is first activated by ATP to form Pro-AMP and then transferred to the acceptor end of tRNA(Pro). As ProRS can inadvertently accommodate and process non-cognate amino acids such as alanine and cysteine, to avoid such errors it has two additional distinct editing activities against alanine. One activity is designated as 'pretransfer' editing and involves the tRNA(Pro)-independent hydrolysis of activated Ala-AMP. The other activity is designated 'posttransfer' editing and involves deacylation of mischarged Ala-tRNA(Pro). The misacylated Cys-tRNA(Pro) is not edited by ProRS. The chain is Proline--tRNA ligase from Clostridium botulinum (strain Eklund 17B / Type B).